A 645-amino-acid chain; its full sequence is Protein LHY (645 aa).

Ser-6 is modified (phosphoserine). An HTH myb-type domain is found at 19 to 73 (TITKQRERWTEDEHERFLEALRLYGRAWQRIEEHIGTKTAVQIRSHAQKFFTKLE). Residues 46–69 (WQRIEEHIGTKTAVQIRSHAQKFF) constitute a DNA-binding region (H-T-H motif). Disordered stretches follow at residues 89 to 127 (IEIP…AKLV), 149 to 212 (EKTS…GTTV), 410 to 437 (QNLA…ADSK), and 458 to 500 (AQKK…TDEN). Residues 110-120 (NNGTSSSQVSS) are compositionally biased toward polar residues. Basic and acidic residues predominate over residues 149 to 158 (EKTSTGKENQ). The segment covering 159 to 169 (DENCSGVSTVN) has biased composition (polar residues). Positions 197–207 (VPKKNKDKDGN) are enriched in basic and acidic residues. The span at 468–478 (SCGSNTPSGSD) shows a compositional bias: polar residues. Residues 483-498 (ALDKMEKDKEDVKETD) show a composition bias toward basic and acidic residues.

Homodimer or heterodimer with CCA1. Interacts with CCA1 (via internal domain); independently of photoperiod. Functions probably as part of a large complex. Interacts with CKB1 and CKB3. Interacts with LNK1 and LNK2. Post-translationally, phosphorylated by CK2. Expressed in leaves, roots, stems, flowers and siliques.

The protein resides in the nucleus. Its function is as follows. Transcription factor involved in the circadian clock. Binds to the promoter region of APRR1/TOC1 and TCP21/CHE to repress their transcription. Represses both CCA1 and itself. May recognize the promoter of JMJ14 to regulates its expression during the night in a circadian manner. The polypeptide is Protein LHY (Arabidopsis thaliana (Mouse-ear cress)).